The sequence spans 165 residues: PARP-type zinc finger-containing protein C13F5.07c (165 aa).

The PARP-type; degenerate zinc-finger motif lies at 8 to 100 (YRIEIAPNNR…KVVDAINEGH (93 aa)). Residues 100–114 (HVSESDERESRKLGE) are compositionally biased toward basic and acidic residues. A disordered region spans residues 100 to 165 (HVSESDERES…TDGSEAYEDD (66 aa)). The span at 117-128 (NVNSQKLKTSSP) shows a compositional bias: polar residues. Basic residues predominate over residues 131–141 (VVRKNKRHHTT). A compositionally biased stretch (acidic residues) spans 149–165 (SDLDAEFTDGSEAYEDD).

Its subcellular location is the cytoplasm. It is found in the nucleus. The protein is PARP-type zinc finger-containing protein C13F5.07c of Schizosaccharomyces pombe (strain 972 / ATCC 24843) (Fission yeast).